Here is a 601-residue protein sequence, read N- to C-terminus: Transcription factor Ken (601 aa).

Positions 33 to 101 (ADLTIVCENK…LYSGQTCITS (69 aa)) constitute a BTB domain. 3 disordered regions span residues 188–276 (AAEC…TINP), 331–365 (LSDG…DNQP), and 471–491 (DHPE…AGSN). Basic and acidic residues-rich tracts occupy residues 190–200 (ECERSGGHNNK) and 207–216 (CTHKDNKSDK). Residues 223–234 (NLSNAPPSGTSG) show a composition bias toward polar residues. Low complexity predominate over residues 235–247 (SNSNISTSSNHQQ). Residues 248–258 (QQHHHHHHHNH) show a composition bias toward basic residues. The span at 259–275 (NNNNNNNNNNSSSSTIN) shows a compositional bias: low complexity. The span at 476-490 (RSGSASGSGANLAGS) shows a compositional bias: low complexity. 3 C2H2-type zinc fingers span residues 500-522 (YRCE…LRVH), 528-551 (FACR…CSVH), and 567-590 (YSCC…SGHH).

Expressed from stage 5 in two rather faint stripes at positions of 64% (anterior domain; AD) and 17% (posterior domain; PD) egg length. During early gastrulation, at stage 6, these two stripes become more evident and detectable at the region posterior to the cephalic furrow and in the hindgut primordium. The AD disappears as gastrulation proceeds, while the PD remains. At stage 15, the AD appears again in the foregut, and PD expression in the hindgut and anal pad. In imaginal disks, it is ubiquitously expressed in both males and females in genital and eye-antennal disks. Not expressed in the brain. In genital disks, it is expressed along the margin of the anterior bulbus in males, while in females it is expressed in the posterior compartment along the anterior-posterior border, with medial expansion in the most posterior region.

Its subcellular location is the nucleus. Functionally, transcription factor required for terminalia development. Negative regulator of the JAK/STAT pathway: represses JAK/STAT-dependent expression of ventral veins lacking (vvl) in the posterior spiracles. The polypeptide is Transcription factor Ken (ken) (Drosophila melanogaster (Fruit fly)).